We begin with the raw amino-acid sequence, 365 residues long: Cytosolic 5'-nucleotidase 1A (365 aa).

Residues 1–11 (MEPGQPREARE) show a composition bias toward basic and acidic residues. Residues 1–23 (MEPGQPREAREPGPGAETAAVPR) are disordered. The Nucleophile role is filled by Asp208.

Belongs to the 5'-nucleotidase type 3 family. Mg(2+) serves as cofactor.

It is found in the cytoplasm. The enzyme catalyses a ribonucleoside 5'-phosphate + H2O = a ribonucleoside + phosphate. The catalysed reaction is a 2'-deoxyribonucleoside 5'-phosphate + H2O = a 2'-deoxyribonucleoside + phosphate. It carries out the reaction IMP + H2O = inosine + phosphate. It catalyses the reaction AMP + H2O = adenosine + phosphate. The enzyme catalyses dCMP + H2O = 2'-deoxycytidine + phosphate. Its activity is regulated as follows. Activated by ADP. In terms of biological role, catalyzes the hydrolysis of ribonucleotide and deoxyribonucleotide monophosphates, releasing inorganic phosphate and the corresponding nucleoside. AMP is the major substrate but can also hydrolyze dCMP and IMP. The sequence is that of Cytosolic 5'-nucleotidase 1A (Nt5c1a) from Mus musculus (Mouse).